The chain runs to 445 residues: Probable glycine dehydrogenase (decarboxylating) subunit 1 (445 aa).

The protein belongs to the GcvP family. N-terminal subunit subfamily. As to quaternary structure, the glycine cleavage system is composed of four proteins: P, T, L and H. In this organism, the P 'protein' is a heterodimer of two subunits.

It catalyses the reaction N(6)-[(R)-lipoyl]-L-lysyl-[glycine-cleavage complex H protein] + glycine + H(+) = N(6)-[(R)-S(8)-aminomethyldihydrolipoyl]-L-lysyl-[glycine-cleavage complex H protein] + CO2. Its function is as follows. The glycine cleavage system catalyzes the degradation of glycine. The P protein binds the alpha-amino group of glycine through its pyridoxal phosphate cofactor; CO(2) is released and the remaining methylamine moiety is then transferred to the lipoamide cofactor of the H protein. The chain is Probable glycine dehydrogenase (decarboxylating) subunit 1 from Anaeromyxobacter dehalogenans (strain 2CP-1 / ATCC BAA-258).